Reading from the N-terminus, the 281-residue chain is Pantothenate synthetase (281 aa).

ATP is bound at residue 29–36 (MGYLHEGH). The active-site Proton donor is the His-36. Gln-60 provides a ligand contact to (R)-pantoate. Gln-60 serves as a coordination point for beta-alanine. 146–149 (GQKD) provides a ligand contact to ATP. (R)-pantoate is bound at residue Gln-152. Residues Val-175 and 183-186 (MSSR) contribute to the ATP site.

The protein belongs to the pantothenate synthetase family. Homodimer.

The protein resides in the cytoplasm. It carries out the reaction (R)-pantoate + beta-alanine + ATP = (R)-pantothenate + AMP + diphosphate + H(+). It functions in the pathway cofactor biosynthesis; (R)-pantothenate biosynthesis; (R)-pantothenate from (R)-pantoate and beta-alanine: step 1/1. Functionally, catalyzes the condensation of pantoate with beta-alanine in an ATP-dependent reaction via a pantoyl-adenylate intermediate. This is Pantothenate synthetase from Pseudothermotoga lettingae (strain ATCC BAA-301 / DSM 14385 / NBRC 107922 / TMO) (Thermotoga lettingae).